Here is a 384-residue protein sequence, read N- to C-terminus: 5-amino-6-(D-ribitylamino)uracil--L-tyrosine 4-hydroxyphenyl transferase 2 (384 aa).

Residues 53–286 (VSYVVNRNIY…IAISRVILHT (234 aa)) form the Radical SAM core domain. Cysteine 67, cysteine 71, and cysteine 74 together coordinate [4Fe-4S] cluster.

Belongs to the radical SAM superfamily. CofH family. As to quaternary structure, consists of two subunits, CofG and CofH. The cofactor is [4Fe-4S] cluster.

It catalyses the reaction 5-amino-6-(D-ribitylamino)uracil + L-tyrosine + S-adenosyl-L-methionine = 5-amino-5-(4-hydroxybenzyl)-6-(D-ribitylimino)-5,6-dihydrouracil + 2-iminoacetate + 5'-deoxyadenosine + L-methionine + H(+). The protein operates within cofactor biosynthesis; coenzyme F0 biosynthesis. In terms of biological role, catalyzes the radical-mediated synthesis of 5-amino-5-(4-hydroxybenzyl)-6-(D-ribitylimino)-5,6-dihydrouracil from 5-amino-6-(D-ribitylamino)uracil and L-tyrosine. In Methanosarcina barkeri (strain Fusaro / DSM 804), this protein is 5-amino-6-(D-ribitylamino)uracil--L-tyrosine 4-hydroxyphenyl transferase 2.